The sequence spans 215 residues: Ribonuclease HII (215 aa).

The region spanning 19 to 213 is the RNase H type-2 domain; sequence QTVAGVDEVG…SLRQPSQQID (195 aa). A divalent metal cation-binding residues include D25, E26, and D121.

It belongs to the RNase HII family. It depends on Mn(2+) as a cofactor. Mg(2+) is required as a cofactor.

The protein resides in the cytoplasm. The enzyme catalyses Endonucleolytic cleavage to 5'-phosphomonoester.. Functionally, endonuclease that specifically degrades the RNA of RNA-DNA hybrids. This chain is Ribonuclease HII, found in Synechococcus elongatus (strain ATCC 33912 / PCC 7942 / FACHB-805) (Anacystis nidulans R2).